Consider the following 57-residue polypeptide: Large ribosomal subunit protein bL32 (57 aa).

The span at 1–16 shows a compositional bias: basic residues; it reads MAVQKSRKTPSRRGMR. The disordered stretch occupies residues 1-37; it reads MAVQKSRKTPSRRGMRRSHDALSTTAITVDETTGELH. Positions 21-31 are enriched in polar residues; the sequence is ALSTTAITVDE.

The protein belongs to the bacterial ribosomal protein bL32 family.

The sequence is that of Large ribosomal subunit protein bL32 from Hydrogenovibrio crunogenus (strain DSM 25203 / XCL-2) (Thiomicrospira crunogena).